A 655-amino-acid chain; its full sequence is MGIFSIANQHIRFAVKLACAIVLALFIGFHFQLETPRWAVLTAAIVAAGPAFAAGGEPYSGAIRYRGMLRIIGTFIGCIAALIIIISMIRAPLLMILVCCVWAGFCTWISSLVRIENSYAWGLSGYTALIIVITIQTEPLLTPQFALERCSEIVIGIGCAILADLLFSPRSIKQEVDRELDSLLVAQYQLMQLCIKHGDSEEVDNAWGDLVRRTAALEGMRSNLNMESSRWVRANRRLKALNTLSLTLITQSCETYLIQNTRPELITDTFRELFETPVETVQDVHRQLKRMRRVIVWTGERETPVTLYSWVGAATRYLLLKRGVISNTKISATEEEILQGEPVVKVESAERHHAMVNFWRTTLSCILGTLFWLWTGWTSGNGAMVMIAVVTSLAMRLPNPRMVCIDFIYGTLAALPLGLLYFLVIIPNTQQSMLLLCLSLAVLGFFIGIEVQKRRLGSMGALASTINIIVLDNPMTFHFSQFLDSALGQIVGCMLAFIVILLVRDKSKDRTGRVLLNQFVSAAVSAMTTNVVRRKENRLPALYQQLFLLMNKFPGDLPKFRLALTMIIAHQRLRDAPIPVNEDLSVFHRQLRRTADHVISAGSDDKRRRYFGLLLDELDIYQEKLRIWEAPPQVTEPVKRLTGMLHKYQNALTDS.

11 helical membrane-spanning segments follow: residues Phe13–Leu33, Trp38–Pro58, Leu69–Ile89, Leu93–Val113, Trp121–Leu141, Glu152–Ile172, Leu370–Val390, Phe407–Pro427, Gln431–Val451, Met459–Phe479, and Phe482–Leu502.

The protein belongs to the aromatic acid exporter ArAE (TC 2.A.85) family.

It localises to the cell inner membrane. Its function is as follows. Forms an efflux pump with AaeA. Could function as a metabolic relief valve, allowing to eliminate certain compounds when they accumulate to high levels in the cell. This is p-hydroxybenzoic acid efflux pump subunit AaeB from Salmonella agona (strain SL483).